The following is a 77-amino-acid chain: Large ribosomal subunit protein uL29 (77 aa).

Belongs to the universal ribosomal protein uL29 family.

This is Large ribosomal subunit protein uL29 from Methanopyrus kandleri (strain AV19 / DSM 6324 / JCM 9639 / NBRC 100938).